A 276-amino-acid chain; its full sequence is Diaminopimelate epimerase (276 aa).

The substrate site is built by asparagine 13, glutamine 46, and asparagine 66. The Proton donor role is filled by cysteine 75. Substrate contacts are provided by residues 76-77 (GN), asparagine 159, asparagine 192, and 210-211 (ER). Cysteine 219 acts as the Proton acceptor in catalysis. Substrate is bound at residue 220-221 (GS).

The protein belongs to the diaminopimelate epimerase family. As to quaternary structure, homodimer.

The protein localises to the cytoplasm. The catalysed reaction is (2S,6S)-2,6-diaminopimelate = meso-2,6-diaminopimelate. Its pathway is amino-acid biosynthesis; L-lysine biosynthesis via DAP pathway; DL-2,6-diaminopimelate from LL-2,6-diaminopimelate: step 1/1. Its function is as follows. Catalyzes the stereoinversion of LL-2,6-diaminopimelate (L,L-DAP) to meso-diaminopimelate (meso-DAP), a precursor of L-lysine and an essential component of the bacterial peptidoglycan. The protein is Diaminopimelate epimerase of Vibrio vulnificus (strain CMCP6).